Here is a 1299-residue protein sequence, read N- to C-terminus: MSDTEENPLEESRESGEMEEEKEEKKEEEEEEEEGEKEKEEEEEEEKGKEEEKEEEKEEGKEEEKKEEEEEKGKKEEEEEEEEEGKGKEEEKEEEKEEEEKEEEKEKEEEEEEEGKGKEEEEEGKEEEEEEKEEEEKEEEKEEEEEEEEEKEEYNPSFEEDALQQSLTEGSLSWEESQEDGEGLEEWVEKEEQREGEEVRGEEESEVRGREEEEGWEEEKSGEEEKSEESERSKERGGEEEGQEKEEAEHEGEREEGREEEEKEKSVEREEEEEEEDTETTETKAGRAKEEKKEKQNKTALVDNIVISHEPPRSSSSLADSPEVSQIYKDNSMKVDDTEEASQKPEDILAQGKDEARLSLEERRKLFQSKGLSAEESLVSVSTEDTLFQKEEDSKVYPLSMTWSFGWNSSLPVYYMREDRRVILYTCAHTAIMYDVVRNTQYHLQGHPNIISCLCVSEDRRWIATADEGPDCLIIIWDSFTGIPVHTIFDSCPEGNGMRSIAITRDSKFLATISDSATQKVCIWKWTLAVETPACTLELPKEYGFQDNLVFNPANNKELVSNSKTQAIYYCWFEDKGILAHSAPVLTEKTFNKLVGKFSQSVFHLKLPQVLSATKEGKLVVWDIHYPSSTSSSAISAFPFIKPRKLVHLQKEAITVLMTIDSYIVTGDIKGNIKFYDHTLSVVNWYSNFKLGAIRTLSFSKTIPSLPTEKSNLPTDCTLRGDLFVVRNFIIGTFDATVYHMTVDGTKLEKLFVEPRDAVYAVSCHPYQPLIAVGSVCGMIKVWDFEKKVYLFSRTFEKGLGVQCLTYNPEGALLGAGFTEGTVYILDAMSLENESPEPFKYSKSSVSHCCFSHDSNYMATADVNFTVAVYMVVVKNGQRVWEYLARLRSHQNSIQSLLFGVHLDSNEPRLLSLGKDRFLIEYNLVKSCKDHLDVLDVHRTDQGNYPTCMIWYPPLTKELFLLICNSGYKVKLFNATTKMCRKTLLGPAYGSPIEHAQVLPVKSTLELQKRYLVFINKDKVGLQILPVDGNPHKTCAIVCHPNGVAGMALSYDGRFAFTAGGQDRSVVQWKINLGALEAAVSLGGEDLTPFYGLVSGGREGKFYRELEDYFYYSQIRSQGIDTMETRQVSEHICLSELPFVMRAIGFYPSEEKIEDMFNEIKFSEYVETGKLIDKINLPDFLKVYLNHRPPFGNTMDGIQNSFNVLGYTNSEGKKAIRREDFLNLLLTKGEHMTEEEMIDCFSTLFGLTPEGWKSEPAATCINGPEICLQKELPEEITAEIFTTEILGLTLSDSSEQLIQ.

A disordered region spans residues methionine 1–glutamine 351. Acidic residues-rich tracts occupy residues glutamate 17 to glutamate 45, glutamate 91 to alanine 162, and glutamate 176 to glutamate 189. Basic and acidic residues predominate over residues lysine 190–valine 199. Residues glutamate 212–glutamate 228 show a composition bias toward acidic residues. The span at glutamate 229–glycine 257 shows a compositional bias: basic and acidic residues. Positions arginine 269 to threonine 280 are enriched in acidic residues. Composition is skewed to basic and acidic residues over residues threonine 281 to asparagine 297 and asparagine 331 to glutamine 351. WD repeat units follow at residues proline 484–tryptophan 526, alanine 534–glutamate 574, valine 585–isoleucine 624, proline 643–histidine 678, serine 681–methionine 741, glycine 745–phenylalanine 785, leucine 791–alanine 828, proline 838–valine 874, tryptophan 881–leucine 924, leucine 935–alanine 975, arginine 981–valine 1027, lysine 1033–isoleucine 1071, tyrosine 1109–serine 1149, and glycine 1169–asparagine 1209.

It localises to the cytoplasm. It is found in the cytoskeleton. The protein localises to the cilium axoneme. Its subcellular location is the cell projection. The protein resides in the cilium. It localises to the flagellum. Involved in spermatozoa motility. May also regulate cilium motility through its role in the assembly of the axonemal radial spokes. In Mus musculus (Mouse), this protein is Cilia- and flagella-associated protein 251.